A 464-amino-acid polypeptide reads, in one-letter code: Kynureninase 2 (464 aa).

Pyridoxal 5'-phosphate-binding positions include L135, T136, 163 to 166, D248, H251, and Y273; that span reads FPSD. K274 bears the N6-(pyridoxal phosphate)lysine mark. Positions 313 and 341 each coordinate pyridoxal 5'-phosphate.

Belongs to the kynureninase family. In terms of assembly, homodimer. Requires pyridoxal 5'-phosphate as cofactor.

Its subcellular location is the cytoplasm. It carries out the reaction L-kynurenine + H2O = anthranilate + L-alanine + H(+). It catalyses the reaction 3-hydroxy-L-kynurenine + H2O = 3-hydroxyanthranilate + L-alanine + H(+). The protein operates within amino-acid degradation; L-kynurenine degradation; L-alanine and anthranilate from L-kynurenine: step 1/1. It participates in cofactor biosynthesis; NAD(+) biosynthesis; quinolinate from L-kynurenine: step 2/3. Catalyzes the cleavage of L-kynurenine (L-Kyn) and L-3-hydroxykynurenine (L-3OHKyn) into anthranilic acid (AA) and 3-hydroxyanthranilic acid (3-OHAA), respectively. The polypeptide is Kynureninase 2 (bna5-2) (Aspergillus fumigatus (strain CBS 144.89 / FGSC A1163 / CEA10) (Neosartorya fumigata)).